Reading from the N-terminus, the 124-residue chain is Putative iron-sulfur cluster insertion protein ErpA (124 aa).

Iron-sulfur cluster-binding residues include cysteine 52, cysteine 116, and cysteine 118.

Belongs to the HesB/IscA family. As to quaternary structure, homodimer. It depends on iron-sulfur cluster as a cofactor.

Its function is as follows. Required for insertion of 4Fe-4S clusters. The sequence is that of Putative iron-sulfur cluster insertion protein ErpA from Delftia acidovorans (strain DSM 14801 / SPH-1).